We begin with the raw amino-acid sequence, 422 residues long: Hexuronate transporter (422 aa).

11 helical membrane passes run 9–29 (VILF…ALSI), 45–65 (MGLI…LGGV), 82–102 (VWSL…LLII), 141–161 (TPLG…AFSW), 163–183 (VSFV…FKFV), 219–239 (LFTA…LTWF), 256–276 (VITV…GFVS), 294–314 (VVLV…GLVA), 321–341 (TLVA…WAVI), 356–376 (FMHF…GFIV), and 381–401 (TFSG…LAVI).

This sequence belongs to the major facilitator superfamily. Phthalate permease family.

Its subcellular location is the cell membrane. It carries out the reaction aldehydo-D-glucuronate(in) + H(+)(in) = aldehydo-D-glucuronate(out) + H(+)(out). It catalyses the reaction aldehydo-D-galacturonate(out) + H(+)(out) = aldehydo-D-galacturonate(in) + H(+)(in). Functionally, transport of aldohexuronates such as D-glucuronate and D-galacturonate. The chain is Hexuronate transporter from Bacillus subtilis (strain 168).